Consider the following 834-residue polypeptide: MKYFIIRSLINKSKNFYNTIIKYNKTKLFALELSIISPQEIQNSAEYKREDGSIVGKVEDSTFYDLEKVNNKNLFSQQIFGPLIDFTCACGKKLNRKNKEINVCTKCGIEFLPSSIRSKRKGYIKLNYAMLHPFYIDYCEKLLMKSKKSLHLLLNMDSFFYFPSYKNWVNFLSEKNHIYLFLLKKILIYNRYSYIYKYSTFFKNRSKFPNNKKMNKLFFYNALGFYGLNSRKTWTVLDFIKGYNFFLGNFSKYYKKLSWYAYQQKISLNKYKSNNISINNFIDNTFNFYKNEVNSLCFKVGGDGIEMFFLQDMAVYSIINKFLKLRVLKLNNLINVNNKYYGKINTIIQNSKNYQYYFKHFYLKKIAPVWMTLRRIPVLPPNLRPILDLSGKNYQKTASSGTLLFMRDIMHEGNLFISDINTFYREIIIHNKKAFNFFSSLPTLYYLNELNIEYVNSKLWLLKYYLMPIQKSITSLFDKNPETINNFSNKKFTDLILDNVKPTSILDSLKGKYGKIRFNLLGKRVDYSGRSVIISAPHLKIYECGIPYEMALTLYYPFLSEYFYKKNNNILKKNYNKSELVLYSKSLIFTKSLQSILLSHPIIINRAPTLHRLGIQSFLPKLTHSKAIELHPLVCPAFNADFDGDQMAIHVPITEIAKLEAIQLMASSLFVYAPASGLPLLIPTQDIILGFNFYTNDLLLKTSREDKSIKQAMNQGFINECHIPYWIKINTKDIFFKFLAYPLRNYIIPIELQLNIKGFSKIIRLNTFKVTNLVFDSLDLLIKKNYISNWLILNNTKFKYLLISFLQNKNLLTNKQVYLRTTLGNIYFNKYLNL.

Zn(2+) contacts are provided by Cys-88, Cys-90, Cys-104, and Cys-107. Asp-641, Asp-643, and Asp-645 together coordinate Mg(2+).

Belongs to the RNA polymerase beta' chain family. RpoC1 subfamily. In plastids the minimal PEP RNA polymerase catalytic core is composed of four subunits: alpha, beta, beta', and beta''. When a (nuclear-encoded) sigma factor is associated with the core the holoenzyme is formed, which can initiate transcription. Mg(2+) serves as cofactor. The cofactor is Zn(2+).

Its subcellular location is the plastid. The enzyme catalyses RNA(n) + a ribonucleoside 5'-triphosphate = RNA(n+1) + diphosphate. Functionally, DNA-dependent RNA polymerase catalyzes the transcription of DNA into RNA using the four ribonucleoside triphosphates as substrates. The chain is DNA-directed RNA polymerase subunit beta' (rpoC1) from Helicosporidium sp. subsp. Simulium jonesii (Green alga).